The sequence spans 156 residues: Small ribosomal subunit protein uS7 (156 aa).

This sequence belongs to the universal ribosomal protein uS7 family. Part of the 30S ribosomal subunit. Contacts proteins S9 and S11.

Functionally, one of the primary rRNA binding proteins, it binds directly to 16S rRNA where it nucleates assembly of the head domain of the 30S subunit. Is located at the subunit interface close to the decoding center, probably blocks exit of the E-site tRNA. The polypeptide is Small ribosomal subunit protein uS7 (Klebsiella pneumoniae subsp. pneumoniae (strain ATCC 700721 / MGH 78578)).